The chain runs to 423 residues: MSKIKQVIAREVLDSRGFPTVEADVILTSGVMGRAAVPSGASTGSHEAVELRDGGARYMGKGVLKAVANVNKIAKKITGMEASDIRLIDDTMIALDGTPNKGKFGANAILAVSMAVLRAGAADKKMPLYDYIRKIYAIKEKNYLLPVPMLNIINGGKHADSGLDVQEFMIVPNVSKSFKEGLREATEVYHTLKGILKAKGMVTAVGDEGGFAPHITKHEDVLKTIMDACKKAGHSQIKLALDCAASEFYKNGKYTFEKKQVSSKDMTKVYSSWVKKYPIVSIEDPLHEDDWDGWLHITKELGKKIRLVGDDLFVTNPERLEEGIEKKTANAILIKLNQIGSVSETIDVINMAHKAGYACVISHRSGETEDAFIADLAVATNAGAIKTGAPCRSERNAKYNRLLQIEQELGKKASYAKTKVFKK.

Glutamine 166 lines the (2R)-2-phosphoglycerate pocket. Glutamate 208 acts as the Proton donor in catalysis. Mg(2+) contacts are provided by aspartate 242, glutamate 283, and aspartate 310. Lysine 335, arginine 364, serine 365, and lysine 386 together coordinate (2R)-2-phosphoglycerate. Lysine 335 acts as the Proton acceptor in catalysis.

It belongs to the enolase family. Mg(2+) is required as a cofactor.

The protein resides in the cytoplasm. Its subcellular location is the secreted. It is found in the cell surface. It catalyses the reaction (2R)-2-phosphoglycerate = phosphoenolpyruvate + H2O. It participates in carbohydrate degradation; glycolysis; pyruvate from D-glyceraldehyde 3-phosphate: step 4/5. In terms of biological role, catalyzes the reversible conversion of 2-phosphoglycerate (2-PG) into phosphoenolpyruvate (PEP). It is essential for the degradation of carbohydrates via glycolysis. The polypeptide is Enolase (Elusimicrobium minutum (strain Pei191)).